Reading from the N-terminus, the 354-residue chain is Protein sex-lethal (354 aa).

The interval Met-1–Tyr-21 is disordered. RRM domains are found at residues Thr-125–Pro-203 and Thr-211–Glu-291.

In terms of assembly, part of a complex containing fl(2)d, Sxl and vir. Part of a complex composed of at least mei-P26, bam, bgcn and Sxl; this complex is involved in translational repression of nanos mRNA. interacts with mei-p26. Interacts with nito. Interacts with Unr; cooperates with Unr to prevent translation of msl-2 transcripts. Interacts with how; promoting nuclear retention of msl-2 transcripts. In terms of tissue distribution, expressed in somatic tissues, but not in the pole cells, which are the precursors of the germline. Expressed in the anterior of the germarium.

Its subcellular location is the nucleus. The protein localises to the cytoplasm. Its function is as follows. Sex determination switch protein, which controls sexual development and dosage compensation in females. Sxl protein is only active in females: it is inactive in males throughout development. Acts as a mRNA-binding protein, which specifically binds to a subset of pre-mRNAs and mRNAs and regulates their processing and/or translation. Binds nanos mRNA and is involved in bam-bgcn mediated repression of nanos mRNA translation. Promotes sexual development by controlling the female-specific alternative splicing of the transformer (tra) pre-mRNA: binds tightly to a characteristic uridine-rich polypyrimidine tract at the non-sex specific 3' splice site in one of the tra introns, preventing the general splicing factor U2AF from binding to this site and forcing it to bind to the female-specific 3' splice site. Acts as an inhibitor of dosage compensation in females by preventing production of msl-2 protein, an essential component of the MSL complex, the complex that mediates X-chromosome dosage compensation. Specifically binds to uridine stretches in both the 5'- and 3'-UTR of msl-2 transcripts. Sxl first acts at the splicing level by promoting retention of an intron in the 5' UTR of msl-2 pre-mRNA. The retained intron contains Sxl-binding sites that are required for subsequent steps of repression: after msl-2 mRNA export into the cytoplasm, Sxl coordinates its translational repression by targeting early steps of translation initiation. Together with how, Sxl also prevents production of msl-2 protein by preventing nuclear export of msl-2 transcripts. Functionally, embryo-specific product, which is expressed early only in female embryos and specifies female-adult specific splicing. This chain is Protein sex-lethal, found in Drosophila melanogaster (Fruit fly).